The chain runs to 487 residues: GDP-Man:Man(3)GlcNAc(2)-PP-Dol alpha-1,2-mannosyltransferase (487 aa).

Residues 1–16 (MAGILCLCGMMRLLTA) lie on the Lumenal side of the membrane. Residues 17 to 37 (LFIPVLIASIGLCLVLVLLFI) form a helical membrane-spanning segment. Over 38–231 (CTRLWIQRKK…SNNPVLSRLK (194 aa)) the chain is Cytoplasmic. An intramembrane region (helical) is located at residues 232–252 (LIYYYLFAVIYGWVGSCSDVI). The Cytoplasmic portion of the chain corresponds to 253-394 (MVNSTWTFAH…IGLHTMWNEH (142 aa)). The helical intramembrane region spans 395 to 415 (FGIGIVECMAAGTIILAHNSG). Over 416-487 (GPKLDIVVPY…FLASSEPLFM (72 aa)) the chain is Cytoplasmic.

This sequence belongs to the glycosyltransferase group 1 family. Glycosyltransferase 4 subfamily.

It localises to the endoplasmic reticulum membrane. It carries out the reaction an alpha-D-Man-(1-&gt;3)-[alpha-D-Man-(1-&gt;6)]-beta-D-Man-(1-&gt;4)-beta-D-GlcNAc-(1-&gt;4)-alpha-D-GlcNAc-diphospho-di-trans,poly-cis-dolichol + 2 GDP-alpha-D-mannose = an alpha-D-Man-(1-&gt;2)-alpha-D-Man-(1-&gt;2)-alpha-D-Man-(1-&gt;3)-[alpha-D-Man-(1-&gt;6)]-beta-D-Man-(1-&gt;4)-beta-D-GlcNAc-(1-&gt;4)-alpha-D-GlcNAc-diphospho-di-trans,poly-cis-dolichol + 2 GDP + 2 H(+). Its pathway is protein modification; protein glycosylation. Functionally, GDP-Man:Man(3)GlcNAc(2)-PP-Dol alpha-1,2-mannosyltransferase that operates in the biosynthetic pathway of dolichol-linked oligosaccharides, the glycan precursors employed in protein asparagine (N)-glycosylation. The assembly of dolichol-linked oligosaccharides begins on the cytosolic side of the endoplasmic reticulum membrane and finishes in its lumen. The sequential addition of sugars to dolichol pyrophosphate produces dolichol-linked oligosaccharides containing fourteen sugars, including two GlcNAcs, nine mannoses and three glucoses. Once assembled, the oligosaccharide is transferred from the lipid to nascent proteins by oligosaccharyltransferases. Catalyzes, on the cytoplasmic face of the endoplasmic reticulum, the addition of the fourth and fifth mannose residues to the dolichol-linked oligosaccharide chain, to produce Man(5)GlcNAc(2)-PP-dolichol core oligosaccharide. Man(5)GlcNAc(2)-PP-dolichol is a substrate for ALG3, the following enzyme in the biosynthetic pathway. This Xenopus tropicalis (Western clawed frog) protein is GDP-Man:Man(3)GlcNAc(2)-PP-Dol alpha-1,2-mannosyltransferase (alg11).